A 360-amino-acid polypeptide reads, in one-letter code: Phospho-N-acetylmuramoyl-pentapeptide-transferase (360 aa).

10 helical membrane passes run 27 to 47, 71 to 91, 93 to 113, 128 to 148, 168 to 188, 199 to 219, 239 to 259, 262 to 282, 288 to 308, and 337 to 357; these read GAMI…INSL, TPTM…LLWA, LASV…AIGF, FSGK…AFTI, LVIN…VGAG, GLAI…AYLS, LAVV…FNAP, AIFM…TVAV, IVLA…IIQV, and QVVI…LSTL.

The protein belongs to the glycosyltransferase 4 family. MraY subfamily. The cofactor is Mg(2+).

The protein localises to the cell inner membrane. It carries out the reaction UDP-N-acetyl-alpha-D-muramoyl-L-alanyl-gamma-D-glutamyl-meso-2,6-diaminopimeloyl-D-alanyl-D-alanine + di-trans,octa-cis-undecaprenyl phosphate = di-trans,octa-cis-undecaprenyl diphospho-N-acetyl-alpha-D-muramoyl-L-alanyl-D-glutamyl-meso-2,6-diaminopimeloyl-D-alanyl-D-alanine + UMP. Its pathway is cell wall biogenesis; peptidoglycan biosynthesis. Its function is as follows. Catalyzes the initial step of the lipid cycle reactions in the biosynthesis of the cell wall peptidoglycan: transfers peptidoglycan precursor phospho-MurNAc-pentapeptide from UDP-MurNAc-pentapeptide onto the lipid carrier undecaprenyl phosphate, yielding undecaprenyl-pyrophosphoryl-MurNAc-pentapeptide, known as lipid I. The polypeptide is Phospho-N-acetylmuramoyl-pentapeptide-transferase (Brucella abortus (strain S19)).